We begin with the raw amino-acid sequence, 273 residues long: 4-hydroxy-tetrahydrodipicolinate reductase (273 aa).

NAD(+) contacts are provided by residues 12-17 (GAGGRM) and E38. NADP(+) is bound at residue R39. Residues 102 to 104 (GTT) and 126 to 129 (AANF) contribute to the NAD(+) site. The active-site Proton donor/acceptor is the H159. H160 lines the (S)-2,3,4,5-tetrahydrodipicolinate pocket. The active-site Proton donor is the K163. 169–170 (GT) contacts (S)-2,3,4,5-tetrahydrodipicolinate.

The protein belongs to the DapB family. In terms of assembly, homotetramer.

It localises to the cytoplasm. It carries out the reaction (S)-2,3,4,5-tetrahydrodipicolinate + NAD(+) + H2O = (2S,4S)-4-hydroxy-2,3,4,5-tetrahydrodipicolinate + NADH + H(+). It catalyses the reaction (S)-2,3,4,5-tetrahydrodipicolinate + NADP(+) + H2O = (2S,4S)-4-hydroxy-2,3,4,5-tetrahydrodipicolinate + NADPH + H(+). It functions in the pathway amino-acid biosynthesis; L-lysine biosynthesis via DAP pathway; (S)-tetrahydrodipicolinate from L-aspartate: step 4/4. In terms of biological role, catalyzes the conversion of 4-hydroxy-tetrahydrodipicolinate (HTPA) to tetrahydrodipicolinate. The protein is 4-hydroxy-tetrahydrodipicolinate reductase of Salmonella enteritidis PT4 (strain P125109).